The chain runs to 570 residues: Proline--tRNA ligase (570 aa).

The tract at residues 238–257 (ARPAPAEHAEPRPLEKVETP) is disordered.

The protein belongs to the class-II aminoacyl-tRNA synthetase family. ProS type 1 subfamily. In terms of assembly, homodimer.

It localises to the cytoplasm. It catalyses the reaction tRNA(Pro) + L-proline + ATP = L-prolyl-tRNA(Pro) + AMP + diphosphate. In terms of biological role, catalyzes the attachment of proline to tRNA(Pro) in a two-step reaction: proline is first activated by ATP to form Pro-AMP and then transferred to the acceptor end of tRNA(Pro). As ProRS can inadvertently accommodate and process non-cognate amino acids such as alanine and cysteine, to avoid such errors it has two additional distinct editing activities against alanine. One activity is designated as 'pretransfer' editing and involves the tRNA(Pro)-independent hydrolysis of activated Ala-AMP. The other activity is designated 'posttransfer' editing and involves deacylation of mischarged Ala-tRNA(Pro). The misacylated Cys-tRNA(Pro) is not edited by ProRS. This Geobacter sulfurreducens (strain ATCC 51573 / DSM 12127 / PCA) protein is Proline--tRNA ligase.